The following is a 419-amino-acid chain: MYEPTLTVESFDSELAGAIRDERRRQEHHVELIASENYVSPRVLELQGSVLTNKYAEGYPGRRYYGGCEFVDIAEQLAIDRAKELFGADYANVQPHSGSQANAEAYMALMNPGDTLLAMDLSHGGHLTHGSPVSFSGKFYKAVHYGLNAHGDIDYEQAAQLAQEHKPKVILAGFSAFSGIVDWQRFREIADSVNAYFMTDIAHVAGLVAAGVYPSPVQIADVTTTTTHKTLRGPRAGLILAKANPELEKRLNSAVFPGSQGGPLMHIIAAKAVAFKEAMQPEFKTYAQQILKNAKAMAEVMKERGYTIVSGGTQNHLFLVSLLDKNISGKEAEAALGRANITVNKNTVPGETRSPFVTSGLRIGTPAITTRGFKEKEASQLAHWVCDILDDIHNEKVIADVKQKAHELCGKFPVYQELD.

(6S)-5,6,7,8-tetrahydrofolate-binding positions include L121 and 125 to 127 (GHL). Position 229 is an N6-(pyridoxal phosphate)lysine (K229). 354-356 (SPF) serves as a coordination point for (6S)-5,6,7,8-tetrahydrofolate.

The protein belongs to the SHMT family. As to quaternary structure, homodimer. Requires pyridoxal 5'-phosphate as cofactor.

It is found in the cytoplasm. It catalyses the reaction (6R)-5,10-methylene-5,6,7,8-tetrahydrofolate + glycine + H2O = (6S)-5,6,7,8-tetrahydrofolate + L-serine. It participates in one-carbon metabolism; tetrahydrofolate interconversion. Its pathway is amino-acid biosynthesis; glycine biosynthesis; glycine from L-serine: step 1/1. Its function is as follows. Catalyzes the reversible interconversion of serine and glycine with tetrahydrofolate (THF) serving as the one-carbon carrier. This reaction serves as the major source of one-carbon groups required for the biosynthesis of purines, thymidylate, methionine, and other important biomolecules. Also exhibits THF-independent aldolase activity toward beta-hydroxyamino acids, producing glycine and aldehydes, via a retro-aldol mechanism. In Coxiella burnetii (strain RSA 493 / Nine Mile phase I), this protein is Serine hydroxymethyltransferase.